We begin with the raw amino-acid sequence, 873 residues long: Rho GTPase-activating protein gacJJ (873 aa).

The tract at residues 64 to 147 is disordered; it reads DEPSSINTSS…NVNNSSNAPT (84 aa). A compositionally biased stretch (low complexity) spans 66 to 91; it reads PSSINTSSGNIGSNNNSSSNTPLTGS. Residues 103–112 are compositionally biased toward gly residues; sequence IGGGGGGGDN. Low complexity predominate over residues 113-144; it reads GITNSGNIGSSSNSDLKKSTSSGIVNVNNSSN. The PH domain maps to 301–402; that stretch reads NPVREGYLKK…WTVLPIVIES (102 aa). In terms of domain architecture, Rho-GAP spans 428 to 621; that stretch reads VPIEKTVSGN…SLIRDYQYIF (194 aa). The 67-residue stretch at 628-694 folds into the SH3 domain; the sequence is EQKILAKSLY…PASYVELLPH (67 aa). Positions 715–761 form a coiled coil; that stretch reads MLEMESTKTKNQEIDKNIKQLEITKKELESTINDLENEKAALENDPT.

The protein resides in the cytoplasm. Rho GTPase-activating protein involved in the signal transduction pathway. The polypeptide is Rho GTPase-activating protein gacJJ (gacJJ) (Dictyostelium discoideum (Social amoeba)).